Consider the following 160-residue polypeptide: uncharacterized protein (160 aa).

Residues 5–160 (ISLSFYKPEH…GEQLILHHFL (156 aa)) form the N-acetyltransferase domain.

This is an uncharacterized protein from Bacillus subtilis (strain 168).